We begin with the raw amino-acid sequence, 131 residues long: Histone H2B.2 (131 aa).

Positions 1-20 (MAPPKAEKKPASKAPAEKKP) are enriched in basic and acidic residues. Residues 1–39 (MAPPKAEKKPASKAPAEKKPAAKKTASSTDAKKRTKTRK) form a disordered region. N6-acetyllysine; alternate occurs at positions 8 and 9. Residues K8 and K9 each participate in a glycyl lysine isopeptide (Lys-Gly) (interchain with G-Cter in SUMO); alternate cross-link. Phosphoserine is present on S12. At K13 the chain carries N6-acetyllysine. K18 is subject to N6-acetyllysine; alternate. K18 is covalently cross-linked (Glycyl lysine isopeptide (Lys-Gly) (interchain with G-Cter in SUMO); alternate). K19 participates in a covalent cross-link: Glycyl lysine isopeptide (Lys-Gly) (interchain with G-Cter in SUMO). A Glycyl lysine isopeptide (Lys-Gly) (interchain with G-Cter in ubiquitin) cross-link involves residue K125.

This sequence belongs to the histone H2B family. As to quaternary structure, the nucleosome is a histone octamer containing two molecules each of H2A, H2B, H3 and H4 assembled in one H3-H4 heterotetramer and two H2A-H2B heterodimers. The octamer wraps approximately 147 bp of DNA. Post-translationally, monoubiquitinated to form H2BK123ub1. H2BK123ub1 gives a specific tag for epigenetic transcriptional activation and is also prerequisite for H3K4me and H3K79me formation. H2BK123ub1 also modulates the formation of double-strand breaks during meiosis and is a prerequisite for DNA-damage checkpoint activation. Phosphorylated by STE20 to form H2BS10ph during progression through meiotic prophase. May be correlated with chromosome condensation. In terms of processing, acetylated by GCN5 to form H2BK11ac and H2BK16ac. H2BK16ac can also be formed by ESA1. Acetylation of N-terminal lysines and particularly formation of H2BK11acK16ac has a positive effect on transcription. Post-translationally, sumoylation to form H2BK6su or H2BK7su, and probably also H2BK16su or H2BK17su, occurs preferentially near the telomeres and represses gene transcription.

It is found in the nucleus. Its subcellular location is the chromosome. Core component of nucleosome. Nucleosomes wrap and compact DNA into chromatin, limiting DNA accessibility to the cellular machineries which require DNA as a template. Histones thereby play a central role in transcription regulation, DNA repair, DNA replication and chromosomal stability. DNA accessibility is regulated via a complex set of post-translational modifications of histones, also called histone code, and nucleosome remodeling. This is Histone H2B.2 (HTB2) from Scheffersomyces stipitis (strain ATCC 58785 / CBS 6054 / NBRC 10063 / NRRL Y-11545) (Yeast).